Reading from the N-terminus, the 66-residue chain is Toxin Tppa2 (66 aa).

Positions 1-63 (KDGYLVGNDG…TWSRATNKCG (63 aa)) constitute an LCN-type CS-alpha/beta domain. Cystine bridges form between Cys-11–Cys-62, Cys-15–Cys-37, Cys-23–Cys-43, and Cys-27–Cys-45. At Cys-62 the chain carries Cysteine amide.

It belongs to the long (4 C-C) scorpion toxin superfamily. Sodium channel inhibitor family. Beta subfamily. Expressed by the venom gland.

The protein localises to the secreted. Its function is as follows. Beta toxins bind voltage-independently at site-4 of sodium channels (Nav) and shift the voltage of activation toward more negative potentials thereby affecting sodium channel activation and promoting spontaneous and repetitive firing. The protein is Toxin Tppa2 of Tityus pachyurus (Colombian scorpion).